Consider the following 238-residue polypeptide: Large ribosomal subunit protein uL2 (238 aa).

Residues 200 to 238 (HGGGLHQSVSRPSTVSRNAPPGRKVGHIAARRTGRKEGK) are disordered. Over residues 206–216 (QSVSRPSTVSR) the composition is skewed to polar residues. Residues 223–238 (KVGHIAARRTGRKEGK) are compositionally biased toward basic residues.

This sequence belongs to the universal ribosomal protein uL2 family. Part of the 50S ribosomal subunit. Forms a bridge to the 30S subunit in the 70S ribosome.

Functionally, one of the primary rRNA binding proteins. Required for association of the 30S and 50S subunits to form the 70S ribosome, for tRNA binding and peptide bond formation. It has been suggested to have peptidyltransferase activity; this is somewhat controversial. Makes several contacts with the 16S rRNA in the 70S ribosome. The chain is Large ribosomal subunit protein uL2 from Saccharolobus islandicus (strain L.S.2.15 / Lassen #1) (Sulfolobus islandicus).